The chain runs to 318 residues: Triplex capsid protein 2 (318 aa).

It belongs to the herpesviridae TRX2 protein family. In terms of assembly, interacts with TRX1 and major capisd protein/MCP.

It is found in the virion. It localises to the host nucleus. Its function is as follows. Structural component of the T=16 icosahedral capsid. The capsid is composed of pentamers and hexamers of major capsid protein/MCP, which are linked together by heterotrimers called triplexes. These triplexes are formed by a single molecule of triplex protein 1/TRX1 and two copies of triplex protein 2/TRX2. Additionally, TRX1 is required for efficient transport of TRX2 to the nucleus, which is the site of capsid assembly. This Human herpesvirus 2 (strain HG52) (HHV-2) protein is Triplex capsid protein 2.